A 229-amino-acid chain; its full sequence is Protein TraJ (229 aa).

The protein localises to the cytoplasm. Functionally, this protein is essential for positively regulating the expression of transfer genes that are involved in the conjugal transfer of DNA between bacterial cells. The sequence is that of Protein TraJ (traJ) from Escherichia coli (strain K12).